The sequence spans 400 residues: WD repeat and FYVE domain-containing protein 2 (400 aa).

WD repeat units follow at residues 22 to 61 (GSQE…QYWP), 66 to 105 (AMPS…NKMT), 112 to 150 (AHQS…QRLG), 153 to 192 (RTSA…CTLL), 197 to 236 (GHTG…GTAI), and 240 to 279 (GHND…QETP). An FYVE-type zinc finger spans residues 281–352 (WLDSDSCQKC…VCDSCHEAIT (72 aa)). Zn(2+) is bound by residues C287, C290, C314, C317, C322, C325, C344, and C347. A WD 7 repeat occupies 364-399 (DSKHNIVHVHFDATRGWLLTSGTDKVIKLWDMTPVV).

As to quaternary structure, homodimer. Interacts (via WD repeats 1-3) with AKT1, AKT2, PRKCZ and PRKCI. Interacts with VAMP2. Forms a complex with VAMP2 and PRKCZ. Interacts with FOXO1. Forms a complex with AKT1 and FOXO1. In terms of tissue distribution, highly expressed in the brain (at protein level).

The protein resides in the endosome. It localises to the early endosome. It is found in the cytoplasm. Acts in an adapter protein-like fashion to mediate the interaction between the kinase PRKCZ and its substrate VAMP2 and increases the PRKCZ-dependent phosphorylation of VAMP2. Positively regulates adipocyte differentiation, by facilitating the phosphorylation and thus inactivation of the anti-adipogenetic transcription factor FOXO1 by the kinase AKT1. Plays a role in endosomal control of AKT2 signaling; required for insulin-stimulated AKT2 phosphorylation and glucose uptake and insulin-stimulated phosphorylation of AKT2 substrates. Participates in transferrin receptor endocytosis. The sequence is that of WD repeat and FYVE domain-containing protein 2 (Wdfy2) from Mus musculus (Mouse).